Reading from the N-terminus, the 719-residue chain is MQEPAITPDLIAAHGLKPEEYDMILEIIGREPTFTELGIFSAMWNEHCSYKSSKKWLRTLPTSGPQVICGPGENAGVVDIGDGQAVVFKMESHNHPSYIEPYQGAATGVGGILRDVFTMGARPIASMNALSFGEPSHPKTRQLVNGVVEGIGGYGNCFGVPCVGGEVRFHPAYNGNCLVNAFAAGLADSDKIFYSAASGVGMPVVYLGAKTGRDGVGGATMASAEFDDTIEEKRPTVQVGDPFTEKRLMEATLELMQTGAVISIQDMGAAGLTCSAVEMGDKGGLGVRLDLENVPQREENMTAYEMMLSESQERMLMVLKPELEAEARAVFEKWDLDFAIVGETIAEDRFLIMHHGEVKADLVLSKLSSTAPEYDRPWVPTPAAEPLAEVPQIDPIDGLRALLASPNYGGKQWVYEQYDTMVMADSARTPGLGAGIVRVHGTDKALAFTSDVTPRYVRANPEEGGKQAVAEAYRNLTAVGARPLATTDNLNFGNPEKPEIMGQFVGAIKGIGAACAALDMPIVSGNVSLYNETDGTAILPTPTIGAVGLLASTDEIIGKEVREGHVALVVGETTGHLGQSALLAEVFNREDGDAPHVDLEAERRNGDFIRANRALIKACTDLGDGGLALAAFELAEGAGVGLHLDDAPTEILFGEDQARYLVACNFDQAEALMSAAGQTGVTVTSVGRFTGDTVRIGGSEALLADLAATFRASFAAAVA.

H47 is an active-site residue. Positions 50 and 89 each coordinate ATP. A Mg(2+)-binding site is contributed by E91. Residues 92–95 (SHNH) and R114 contribute to the substrate site. The Proton acceptor role is filled by H93. D115 contributes to the Mg(2+) binding site. Q238 serves as a coordination point for substrate. D266 is a binding site for Mg(2+). 310 to 312 (ESQ) serves as a coordination point for substrate. ATP-binding residues include D488 and G525. Position 526 (N526) interacts with Mg(2+). S528 serves as a coordination point for substrate.

Belongs to the FGAMS family. As to quaternary structure, monomer. Part of the FGAM synthase complex composed of 1 PurL, 1 PurQ and 2 PurS subunits.

The protein localises to the cytoplasm. The catalysed reaction is N(2)-formyl-N(1)-(5-phospho-beta-D-ribosyl)glycinamide + L-glutamine + ATP + H2O = 2-formamido-N(1)-(5-O-phospho-beta-D-ribosyl)acetamidine + L-glutamate + ADP + phosphate + H(+). It functions in the pathway purine metabolism; IMP biosynthesis via de novo pathway; 5-amino-1-(5-phospho-D-ribosyl)imidazole from N(2)-formyl-N(1)-(5-phospho-D-ribosyl)glycinamide: step 1/2. Part of the phosphoribosylformylglycinamidine synthase complex involved in the purines biosynthetic pathway. Catalyzes the ATP-dependent conversion of formylglycinamide ribonucleotide (FGAR) and glutamine to yield formylglycinamidine ribonucleotide (FGAM) and glutamate. The FGAM synthase complex is composed of three subunits. PurQ produces an ammonia molecule by converting glutamine to glutamate. PurL transfers the ammonia molecule to FGAR to form FGAM in an ATP-dependent manner. PurS interacts with PurQ and PurL and is thought to assist in the transfer of the ammonia molecule from PurQ to PurL. This is Phosphoribosylformylglycinamidine synthase subunit PurL from Ruegeria pomeroyi (strain ATCC 700808 / DSM 15171 / DSS-3) (Silicibacter pomeroyi).